A 260-amino-acid polypeptide reads, in one-letter code: Proteasome subunit alpha (260 aa).

A disordered region spans residues 241-260; sequence VEEEEVKEKEEDYSELDSHY.

This sequence belongs to the peptidase T1A family. As to quaternary structure, the 20S proteasome core is composed of 14 alpha and 14 beta subunits that assemble into four stacked heptameric rings, resulting in a barrel-shaped structure. The two inner rings, each composed of seven catalytic beta subunits, are sandwiched by two outer rings, each composed of seven alpha subunits. The catalytic chamber with the active sites is on the inside of the barrel. Has a gated structure, the ends of the cylinder being occluded by the N-termini of the alpha-subunits. Is capped at one or both ends by the proteasome regulatory ATPase, PAN.

It is found in the cytoplasm. The formation of the proteasomal ATPase PAN-20S proteasome complex, via the docking of the C-termini of PAN into the intersubunit pockets in the alpha-rings, triggers opening of the gate for substrate entry. Interconversion between the open-gate and close-gate conformations leads to a dynamic regulation of the 20S proteasome proteolysis activity. Component of the proteasome core, a large protease complex with broad specificity involved in protein degradation. This is Proteasome subunit alpha from Pyrococcus horikoshii (strain ATCC 700860 / DSM 12428 / JCM 9974 / NBRC 100139 / OT-3).